Here is a 434-residue protein sequence, read N- to C-terminus: MKTVRIETFGCKVNQYESEYMAEQLEKAGYVVLPDGNAAYYIVNSCAVTKEVEKKVKRLIKSIRNRNKNAKIILTGCFAQLSPDEAKNLPVDMVLGIDEKKHIVDHINSLNGKQQVVVSEPGRPVYEKVKGSFEDRTRSYIKVEDGCDNTCTYCAIRLARGTRIRSKPLEIFKEEFAEMVMKGYKEIVITGVNLGKYGKDMGSSLAELLKVIEKVPGDYRVRLSSINVEDVNDEIVKAFKRNPRLCPHLHISVQSGSDDVLKRMGRKYKISDFMRVVDKLRSIDPDFSITTDIIVGFPGETDADFQRTLELVEKVEFSRVHIFRFSPRPGTPASRMEGGVPESKKKERLDVLKEKAKDVSIRYRKRIIGKERKVLAEWYVMKGVLSGYDEYYVKHEFVGNRVGEFHSVRVKSLSEEGVISCRADMVEGKVPARG.

One can recognise an MTTase N-terminal domain in the interval 2 to 112 (KTVRIETFGC…IVDHINSLNG (111 aa)). The [4Fe-4S] cluster site is built by Cys-11, Cys-46, Cys-77, Cys-147, Cys-151, and Cys-154. Residues 133–362 (FEDRTRSYIK…KEKAKDVSIR (230 aa)) enclose the Radical SAM core domain.

Belongs to the methylthiotransferase family. MtaB subfamily. It depends on [4Fe-4S] cluster as a cofactor.

The protein resides in the cytoplasm. It catalyses the reaction N(6)-L-threonylcarbamoyladenosine(37) in tRNA + (sulfur carrier)-SH + AH2 + 2 S-adenosyl-L-methionine = 2-methylsulfanyl-N(6)-L-threonylcarbamoyladenosine(37) in tRNA + (sulfur carrier)-H + 5'-deoxyadenosine + L-methionine + A + S-adenosyl-L-homocysteine + 2 H(+). Its function is as follows. Catalyzes the methylthiolation of N6-threonylcarbamoyladenosine (t(6)A), leading to the formation of 2-methylthio-N6-threonylcarbamoyladenosine (ms(2)t(6)A) at position 37 in tRNAs that read codons beginning with adenine. The protein is Threonylcarbamoyladenosine tRNA methylthiotransferase MtaB (mtaB) of Thermotoga maritima (strain ATCC 43589 / DSM 3109 / JCM 10099 / NBRC 100826 / MSB8).